The following is a 227-amino-acid chain: Cleavage and polyadenylation specificity factor subunit 5 (227 aa).

Position 2 is an N-acetylserine (Ser2). Positions 2–147 (SVVPPNRSQT…DWVIDDCIGN (146 aa)) are necessary for RNA-binding. Arg15 carries the post-translational modification Omega-N-methylarginine. N6-acetyllysine is present on residues Lys23 and Lys29. Tyr40 carries the phosphotyrosine modification. Position 56 is an N6-acetyllysine (Lys56). A Nudix hydrolase domain is found at 76–201 (MRRTVEGVLI…KLVAAPLFEL (126 aa)). Positions 81–160 (EGVLIVHEHR…PNFEPPQYPY (80 aa)) are necessary for interactions with PAPOLA and PABPN1. The tract at residues 102-104 (TFF) is interaction with RNA. Residues 109 to 130 (GELNPGEDEVEGLKRLMTEILG) carry the Nudix box motif.

The protein belongs to the Nudix hydrolase family. CPSF5 subfamily. In terms of assembly, homodimer (via N- and C-terminus); binds RNA as homodimer. Component of the cleavage factor Im (CFIm) complex which is a heterotetramer composed of two subunits of NUDT21/CPSF5 and two subunits of CPSF6 or CPSF7 or a heterodimer of CPSF6 and CPSF7. The cleavage factor Im (CFIm) complex associates with the CPSF and CSTF complexes to promote the assembly of the core mRNA 3'-processing machinery. Interacts with CPSF6 (via the RRM domain); this interaction is direct and enhances binding to RNA. Interacts with CPSF7. Interacts with FIP1L1; this interaction occurs in a RNA sequence-specific manner. Interacts with PABPN1. Interacts (via N-terminus) with PAPOLA (via C-terminus); this interaction is direct and diminished by acetylation. Interacts with SNRNP70. Interacts with VIRMA. Post-translationally, acetylated mainly by p300/CBP, recruited to the complex by CPSF6. Acetylation decreases interaction with PAPAO. Deacetylated by the class I/II HDACs, HDAC1, HDAC3 and HDAC10, and by the class III HDACs, SIRT1 and SIRT2.

Its subcellular location is the nucleus. The protein localises to the cytoplasm. In terms of biological role, component of the cleavage factor Im (CFIm) complex that functions as an activator of the pre-mRNA 3'-end cleavage and polyadenylation processing required for the maturation of pre-mRNA into functional mRNAs. CFIm contributes to the recruitment of multiprotein complexes on specific sequences on the pre-mRNA 3'-end, so called cleavage and polyadenylation signals (pA signals). Most pre-mRNAs contain multiple pA signals, resulting in alternative cleavage and polyadenylation (APA) producing mRNAs with variable 3'-end formation. The CFIm complex acts as a key regulator of cleavage and polyadenylation site choice during APA through its binding to 5'-UGUA-3' elements localized in the 3'-untranslated region (UTR) for a huge number of pre-mRNAs. NUDT21/CPSF5 activates indirectly the mRNA 3'-processing machinery by recruiting CPSF6 and/or CPSF7. Binds to 5'-UGUA-3' elements localized upstream of pA signals that act as enhancers of pre-mRNA 3'-end processing. The homodimer mediates simultaneous sequence-specific recognition of two 5'-UGUA-3' elements within the pre-mRNA. Plays a role in somatic cell fate transitions and pluripotency by regulating widespread changes in gene expression through an APA-dependent function. Binds to chromatin. Binds to, but does not hydrolyze mono- and di-adenosine nucleotides. This Bos taurus (Bovine) protein is Cleavage and polyadenylation specificity factor subunit 5 (NUDT21).